Reading from the N-terminus, the 400-residue chain is F-box/LRR-repeat protein 14 (400 aa).

Residues glutamate 2 to valine 48 enclose the F-box domain. Residues glutamate 2–valine 48 form a required for down-regulation of SNAI1 region. LRR repeat units follow at residues glycine 144–leucine 163, arginine 170–alanine 191, glycine 203–arginine 225, glycine 229–serine 250, and serine 254–alanine 275.

As to quaternary structure, part of a SCF (SKP1-cullin-F-box) ubiquitin-protein ligase complex. Interacts with SKP1 and CUL1. Interacts with SNAI1; the interaction requires the phosphorylation of the two serine residues in the substrate destruction motif D-S-G-X(2,3,4)-S.

Its subcellular location is the cytoplasm. Functionally, substrate-recognition component of some SCF (SKP1-CUL1-F-box protein)-type E3 ubiquitin-protein ligase complexes. The SCF(FBXL14) complex acts by mediating ubiquitination and subsequent degradation of SNAI1. This chain is F-box/LRR-repeat protein 14 (FBXL14), found in Bos taurus (Bovine).